Here is a 174-residue protein sequence, read N- to C-terminus: Crossover junction endodeoxyribonuclease RuvC (174 aa).

Active-site residues include Asp-8, Glu-67, and Asp-139. Residues Asp-8, Glu-67, and Asp-139 each contribute to the Mg(2+) site.

It belongs to the RuvC family. In terms of assembly, homodimer which binds Holliday junction (HJ) DNA. The HJ becomes 2-fold symmetrical on binding to RuvC with unstacked arms; it has a different conformation from HJ DNA in complex with RuvA. In the full resolvosome a probable DNA-RuvA(4)-RuvB(12)-RuvC(2) complex forms which resolves the HJ. It depends on Mg(2+) as a cofactor.

It is found in the cytoplasm. It carries out the reaction Endonucleolytic cleavage at a junction such as a reciprocal single-stranded crossover between two homologous DNA duplexes (Holliday junction).. Its function is as follows. The RuvA-RuvB-RuvC complex processes Holliday junction (HJ) DNA during genetic recombination and DNA repair. Endonuclease that resolves HJ intermediates. Cleaves cruciform DNA by making single-stranded nicks across the HJ at symmetrical positions within the homologous arms, yielding a 5'-phosphate and a 3'-hydroxyl group; requires a central core of homology in the junction. The consensus cleavage sequence is 5'-(A/T)TT(C/G)-3'. Cleavage occurs on the 3'-side of the TT dinucleotide at the point of strand exchange. HJ branch migration catalyzed by RuvA-RuvB allows RuvC to scan DNA until it finds its consensus sequence, where it cleaves and resolves the cruciform DNA. In Pseudomonas putida (strain ATCC 47054 / DSM 6125 / CFBP 8728 / NCIMB 11950 / KT2440), this protein is Crossover junction endodeoxyribonuclease RuvC.